A 230-amino-acid chain; its full sequence is Orotidine 5'-phosphate decarboxylase (230 aa).

Residues Asp11, Lys34, 61-70, Thr117, Arg179, Gln188, Gly208, and Arg209 each bind substrate; that span reads DLKLHDIPNT. The active-site Proton donor is Lys63.

This sequence belongs to the OMP decarboxylase family. Type 1 subfamily. Homodimer.

The enzyme catalyses orotidine 5'-phosphate + H(+) = UMP + CO2. It functions in the pathway pyrimidine metabolism; UMP biosynthesis via de novo pathway; UMP from orotate: step 2/2. Functionally, catalyzes the decarboxylation of orotidine 5'-monophosphate (OMP) to uridine 5'-monophosphate (UMP). This is Orotidine 5'-phosphate decarboxylase from Streptococcus pyogenes serotype M28 (strain MGAS6180).